A 222-amino-acid polypeptide reads, in one-letter code: Superoxide dismutase [Mn], mitochondrial (222 aa).

Residues 1 to 24 constitute a mitochondrion transit peptide; that stretch reads MLSRAVCGTSRQLAPVLGYLGSRQ. A Mn(2+)-binding site is contributed by histidine 50. At tyrosine 58 the chain carries 3'-nitrotyrosine. N6-acetyllysine; alternate is present on residues lysine 68 and lysine 75. N6-succinyllysine; alternate is present on residues lysine 68 and lysine 75. Histidine 98 serves as a coordination point for Mn(2+). Position 114 is an N6-acetyllysine (lysine 114). N6-acetyllysine; alternate is present on residues lysine 122 and lysine 130. Lysine 122 and lysine 130 each carry N6-succinyllysine; alternate. Residues aspartate 183 and histidine 187 each coordinate Mn(2+). Residue lysine 202 is modified to N6-acetyllysine.

It belongs to the iron/manganese superoxide dismutase family. Homotetramer. Requires Mn(2+) as cofactor. In terms of processing, nitrated under oxidative stress. Nitration coupled with oxidation inhibits the catalytic activity. Acetylation at Lys-122 decreases enzymatic activity. Deacetylated by SIRT3 upon exposure to ionizing radiations or after long fasting. Post-translationally, polyubiquitinated; leading to proteasomal degradation. Deubiquitinated by USP36 which increases protein stability.

The protein resides in the mitochondrion matrix. It carries out the reaction 2 superoxide + 2 H(+) = H2O2 + O2. In terms of biological role, destroys superoxide anion radicals which are normally produced within the cells and which are toxic to biological systems. This is Superoxide dismutase [Mn], mitochondrial (SOD2) from Homo sapiens (Human).